The chain runs to 423 residues: Type II methyltransferase M.NlaIV (423 aa).

The 420-residue stretch at 4–423 (IKFIDLFSGM…AVSERLLHTL (420 aa)) folds into the SAM-dependent MTase C5-type domain. Cys80 is a catalytic residue.

Belongs to the class I-like SAM-binding methyltransferase superfamily. C5-methyltransferase family.

It carries out the reaction a 2'-deoxycytidine in DNA + S-adenosyl-L-methionine = a 5-methyl-2'-deoxycytidine in DNA + S-adenosyl-L-homocysteine + H(+). Its function is as follows. A methylase that recognizes the double-stranded sequence 5'-GGNNCC-3', methylates C-? on both strands, and protects the DNA from cleavage by the NlaIV endonuclease. This Neisseria lactamica protein is Type II methyltransferase M.NlaIV (nlaIVM).